The primary structure comprises 60 residues: MEAMKMKLYVVVLVAVIAFSTVHQTVAAVDAPAPSPTSDASSFIPTFFASVAVMAFGFFF.

The first 28 residues, 1–28 (MEAMKMKLYVVVLVAVIAFSTVHQTVAA), serve as a signal peptide directing secretion. 3 positions are modified to 4-hydroxyproline: P32, P34, and P36. O-linked (Ara...) hydroxyproline glycans are attached at residues P32, P34, and P36. S38 carries GPI-anchor amidated serine lipidation. A propeptide spans 39 to 60 (DASSFIPTFFASVAVMAFGFFF) (removed in mature form).

This sequence belongs to the AG-peptide AGP family. Post-translationally, contains 4-hydroxyproline; hydroxylated on Pro-32, Pro-34 and Pro-36. In terms of processing, O-glycosylated on hydroxyprolines; noncontiguous hydroxylproline residues are glycosylated with arabinogalactan.

Its subcellular location is the cell membrane. In terms of biological role, proteoglycan that seems to be implicated in diverse developmental roles such as differentiation, cell-cell recognition, embryogenesis and programmed cell death. Involved in the regulation of root hair elongation. The sequence is that of Arabinogalactan protein 14 from Arabidopsis thaliana (Mouse-ear cress).